A 274-amino-acid polypeptide reads, in one-letter code: Small ribosomal subunit biogenesis GTPase RsgA (274 aa).

Positions 58–215 (KNYLNRPKVA…LVDSPGFSIY (158 aa)) constitute a CP-type G domain. GTP-binding positions include 108–111 (SKLD) and 158–166 (GHSGVGKST). Zn(2+)-binding residues include C238, C243, H245, and C252.

It belongs to the TRAFAC class YlqF/YawG GTPase family. RsgA subfamily. In terms of assembly, monomer. Associates with 30S ribosomal subunit, binds 16S rRNA. Zn(2+) is required as a cofactor.

Its subcellular location is the cytoplasm. In terms of biological role, one of several proteins that assist in the late maturation steps of the functional core of the 30S ribosomal subunit. Helps release RbfA from mature subunits. May play a role in the assembly of ribosomal proteins into the subunit. Circularly permuted GTPase that catalyzes slow GTP hydrolysis, GTPase activity is stimulated by the 30S ribosomal subunit. This Mycoplasmoides gallisepticum (strain R(low / passage 15 / clone 2)) (Mycoplasma gallisepticum) protein is Small ribosomal subunit biogenesis GTPase RsgA.